Reading from the N-terminus, the 163-residue chain is Glycine cleavage system H-like protein gcvH5, mitochondrial (163 aa).

Residues 1-23 constitute a mitochondrion transit peptide; that stretch reads MFLFKTTNNLRKSLSNKFFCTRY. A Lipoyl-binding domain is found at 50 to 136; that stretch reads IGTLGLTENG…MSKGWLCKIK (87 aa).

Belongs to the GcvH family.

It is found in the mitochondrion. The sequence is that of Glycine cleavage system H-like protein gcvH5, mitochondrial (gcvH5) from Dictyostelium discoideum (Social amoeba).